The following is a 715-amino-acid chain: Fatty acid oxidation complex subunit alpha (715 aa).

An enoyl-CoA hydratase/isomerase region spans residues 1-190 (MIYQGKAITV…KVGAVDAVVA (190 aa)). Asp-297 serves as a coordination point for substrate. The interval 312–715 (KDVKLAAVLG…MAKNGQKFFG (404 aa)) is 3-hydroxyacyl-CoA dehydrogenase. Residues Met-325, Asp-344, 401-403 (VVE), Lys-408, and Ser-430 each bind NAD(+). His-451 (for 3-hydroxyacyl-CoA dehydrogenase activity) is an active-site residue. NAD(+) is bound at residue Asn-454. Substrate-binding residues include Asn-501 and Tyr-660.

The protein in the N-terminal section; belongs to the enoyl-CoA hydratase/isomerase family. It in the C-terminal section; belongs to the 3-hydroxyacyl-CoA dehydrogenase family. As to quaternary structure, heterotetramer of two alpha chains (FadB) and two beta chains (FadA).

The catalysed reaction is a (3S)-3-hydroxyacyl-CoA + NAD(+) = a 3-oxoacyl-CoA + NADH + H(+). The enzyme catalyses a (3S)-3-hydroxyacyl-CoA = a (2E)-enoyl-CoA + H2O. It carries out the reaction a 4-saturated-(3S)-3-hydroxyacyl-CoA = a (3E)-enoyl-CoA + H2O. It catalyses the reaction (3S)-3-hydroxybutanoyl-CoA = (3R)-3-hydroxybutanoyl-CoA. The catalysed reaction is a (3Z)-enoyl-CoA = a 4-saturated (2E)-enoyl-CoA. The enzyme catalyses a (3E)-enoyl-CoA = a 4-saturated (2E)-enoyl-CoA. It functions in the pathway lipid metabolism; fatty acid beta-oxidation. Its function is as follows. Involved in the aerobic and anaerobic degradation of long-chain fatty acids via beta-oxidation cycle. Catalyzes the formation of 3-oxoacyl-CoA from enoyl-CoA via L-3-hydroxyacyl-CoA. It can also use D-3-hydroxyacyl-CoA and cis-3-enoyl-CoA as substrate. The protein is Fatty acid oxidation complex subunit alpha of Pseudomonas paraeruginosa (strain DSM 24068 / PA7) (Pseudomonas aeruginosa (strain PA7)).